A 182-amino-acid polypeptide reads, in one-letter code: UPF0397 protein SPG_0438 (182 aa).

The next 5 membrane-spanning stretches (helical) occupy residues 10–30 (VVAV…NIPT), 46–66 (LLSI…GHAI), 73–93 (YGLW…VGLF), 109–129 (ILIF…VLAP), and 148–168 (IVAG…LLLA).

The protein belongs to the UPF0397 family.

The protein resides in the cell membrane. This chain is UPF0397 protein SPG_0438, found in Streptococcus pneumoniae serotype 19F (strain G54).